A 204-amino-acid polypeptide reads, in one-letter code: uncharacterized protein (204 aa).

Residues 118-169 (FPAASERPMPSRRLSKATQNVQTRPSERPAPCHRRPGPRGPGGRDPPEACHP) are disordered.

This is an uncharacterized protein from Encephalitozoon cuniculi (strain GB-M1) (Microsporidian parasite).